Consider the following 130-residue polypeptide: Protein ApaG (130 aa).

Residues 3 to 127 (SAVTRGIEVT…FSLDVPEQRR (125 aa)) enclose the ApaG domain.

The chain is Protein ApaG from Brucella suis biovar 1 (strain 1330).